The sequence spans 1507 residues: Histone-lysine N-methyltransferase set-2 (1507 aa).

Positions 1–32 (MSTHDMNHHPPRKSHSKRDKPSSSNSGPKIEN) are disordered. A compositionally biased stretch (basic residues) spans 9–18 (HPPRKSHSKR). Residues 128-199 (VSLFNMDDNC…QNLLATKCTP (72 aa)) form the RRM domain. Disordered regions lie at residues 280–578 (DYTM…QPQM), 650–697 (EPFS…EEPA), 803–826 (DEEK…SNHL), 842–1058 (SSRG…GPII), and 1163–1199 (QKPR…FKPR). A compositionally biased stretch (pro residues) spans 296–315 (PIPPPPIKEESPPPPPPPPV). The segment covering 316–327 (ASVSNLAPVPSV) has biased composition (low complexity). Polar residues predominate over residues 331–342 (YYNNIQPSSSTM). A compositionally biased stretch (basic and acidic residues) spans 413–444 (VKYETYKMEKRKIKYEGGNKKYEQVHIKERTA). Low complexity predominate over residues 456–465 (SSESASGSSS). Positions 478 to 488 (KKKKRPKSPNR) are enriched in basic residues. Over residues 566 to 575 (HLQTPYQHVQ) the composition is skewed to polar residues. Basic and acidic residues-rich tracts occupy residues 668–680 (DVGR…KPSL) and 803–823 (DEEK…EKPS). Residues 846–868 (FYRKQKPIPKSHPKHQEHHHHAK) are compositionally biased toward basic residues. Residues 869–908 (ASVSTPVHSSSTSRNSSVAPTPQRTVSTSSSSSSAATSAR) show a composition bias toward low complexity. Over residues 941–951 (SFSSTSIQSSP) the composition is skewed to polar residues. The span at 958-971 (SSSSRTSSSSSTSS) shows a compositional bias: low complexity. Residues 973 to 982 (KQEETADEKS) show a composition bias toward basic and acidic residues. Over residues 990–1007 (SSDESSTTGSTATSVVSS) the composition is skewed to low complexity. Basic and acidic residues predominate over residues 1015–1047 (QQEKTDGEPPKKKSQTDFISERVSKIEGEERPL). Pro residues predominate over residues 1179-1190 (EPPPTKRPAPPP). Residues 1340–1345 (RLLQRR) carry the RxxxRR motif motif. An SET domain is found at 1368 to 1485 (KMIKFARSRI…KGEEITYDYK (118 aa)). An S-adenosyl-L-methionine-binding site is contributed by Y1484. Residues 1491 to 1507 (DKIDCLCGAKTCRGYLN) enclose the Post-SET domain.

This sequence belongs to the class V-like SAM-binding methyltransferase superfamily. In terms of assembly, component of the Set1C/COMPASS complex (also known as the SET2 complex), which contains at least set-2, swd-2.1, cfp-1, rbbp-5, wdr-5.1, dpy-30 and ash-2. In terms of tissue distribution, expressed in all cells of embryo. In L1 larva, it is predominantly expressed in Z2 and Z3 primordial germ cells. In adults, it is predominantly expressed in the germline.

The protein resides in the nucleus. It carries out the reaction L-lysyl(4)-[histone H3] + 3 S-adenosyl-L-methionine = N(6),N(6),N(6)-trimethyl-L-lysyl(4)-[histone H3] + 3 S-adenosyl-L-homocysteine + 3 H(+). The catalysed reaction is N(6)-methyl-L-lysyl(4)-[histone H3] + S-adenosyl-L-methionine = N(6),N(6)-dimethyl-L-lysyl(4)-[histone H3] + S-adenosyl-L-homocysteine + H(+). The enzyme catalyses N(6),N(6)-dimethyl-L-lysyl(4)-[histone H3] + S-adenosyl-L-methionine = N(6),N(6),N(6)-trimethyl-L-lysyl(4)-[histone H3] + S-adenosyl-L-homocysteine + H(+). Catalytic component of the COMPASS (Set1C) complex that specifically mono-, di- and trimethylates histone H3 to form H3K4me1/2/3. Binds RNAs which might negatively affect its histone methyltransferase activity. COMPASS recognizes ubiquitinated H2B on one face of the nucleosome which stimulates the methylation of H3 on the opposing face. H3 'Lys-4' methylation represents a specific tag for epigenetic transcriptional activation. Implicated in the epigenetic inheritance of lifespan over several generations. Acts in the germline to limit the longevity of the soma, probably by regulating a lipid metabolism pathway that signals from the germline to the intestine, thereby preventing accumulation of mono-unsaturated fatty acids. Methylation in the germline is required for germline development and fertility, possibly by ensuring genome stability. May act redundantly with mes-3 and mes-4 proteins in the development of a fertile germline. Required for RNAi. Functions as an antagonist of hpl-1 and hpl-2 activity in growth and somatic gonad development. Cooperates with jmjd-3.1 and egl-27 to ensure robust transdifferentiation of the Y rectal cell to the PDA motor neuron during larval development. The polypeptide is Histone-lysine N-methyltransferase set-2 (set-2) (Caenorhabditis elegans).